We begin with the raw amino-acid sequence, 213 residues long: Orotate phosphoribosyltransferase (213 aa).

5-phospho-alpha-D-ribose 1-diphosphate is bound at residue Lys26. Residue 34–35 coordinates orotate; sequence FF. 5-phospho-alpha-D-ribose 1-diphosphate-binding positions include 72 to 73, Arg99, Lys100, Lys103, His105, and 124 to 132; these read YK and DDVITAGTA. Orotate-binding residues include Thr128 and Arg156.

Belongs to the purine/pyrimidine phosphoribosyltransferase family. PyrE subfamily. As to quaternary structure, homodimer. It depends on Mg(2+) as a cofactor.

The enzyme catalyses orotidine 5'-phosphate + diphosphate = orotate + 5-phospho-alpha-D-ribose 1-diphosphate. It participates in pyrimidine metabolism; UMP biosynthesis via de novo pathway; UMP from orotate: step 1/2. Its function is as follows. Catalyzes the transfer of a ribosyl phosphate group from 5-phosphoribose 1-diphosphate to orotate, leading to the formation of orotidine monophosphate (OMP). The protein is Orotate phosphoribosyltransferase of Pseudomonas putida (strain W619).